Consider the following 524-residue polypeptide: MQEFYARVWNTKEMNLLKSLAAVSSMTMFSRVLGFARDAIVARIFGAGMATDAFFVAFKLPNLLRRIFAEGAFSQAFVPILAEYKSKQGEEATRIFVAYVSGLLTLALAVVTVAGMLAAPWVIMVTAPGFADTADKFALTTQLLRITFPYILLISLASLVGAILNTWNRFSIPAFAPTFLNISMIGFALFAAPYFNPPVLALAWAVTVGGVLQLVYQLPYLKKIGMLVLPRINFRDTGAMRVVKQMGPAILGVSVSQISLIINTIFASFLASGSVSWMYYADRLMEFPSGVLGVALGTILLPSLSKSFASGNHDEYCRLMDWGLRLCFLLALPSAVALGILAKPLTVSLFQYGKFTAFDAAMTQRALIAYSVGLIGLIVVKVLAPGFYSRQDIKTPVKIAIVTLIMTQLMNLAFIGPLKHAGLSLSIGLAACLNASLLYWQLRKQNIFTPQPGWMWFLMRLIISVLVMAAVLFGVLHIMPEWSQGSMLWRLLRLMAVVIAGIAAYFAALAVLGFKVKEFVRRTA.

Helical transmembrane passes span 44 to 64, 103 to 123, 146 to 166, 172 to 192, 195 to 215, 250 to 270, 284 to 304, 322 to 342, 367 to 387, 396 to 416, 420 to 440, 456 to 476, and 494 to 514; these read IFGAGMATDAFFVAFKLPNLL, LLTLALAVVTVAGMLAAPWVI, ITFPYILLISLASLVGAILNT, IPAFAPTFLNISMIGFALFAA, FNPPVLALAWAVTVGGVLQLV, ILGVSVSQISLIINTIFASFL, LMEFPSGVLGVALGTILLPSL, WGLRLCFLLALPSAVALGILA, LIAYSVGLIGLIVVKVLAPGF, PVKIAIVTLIMTQLMNLAFIG, HAGLSLSIGLAACLNASLLYW, WFLMRLIISVLVMAAVLFGVL, and LMAVVIAGIAAYFAALAVLGF.

The protein belongs to the MurJ/MviN family.

The protein localises to the cell inner membrane. The protein operates within cell wall biogenesis; peptidoglycan biosynthesis. Functionally, involved in peptidoglycan biosynthesis. Transports lipid-linked peptidoglycan precursors from the inner to the outer leaflet of the cytoplasmic membrane. In Salmonella typhimurium (strain LT2 / SGSC1412 / ATCC 700720), this protein is Probable lipid II flippase MurJ.